A 590-amino-acid polypeptide reads, in one-letter code: Aspartate--tRNA ligase (590 aa).

Glu172 serves as a coordination point for L-aspartate. The segment at 196-199 (QLFK) is aspartate. An L-aspartate-binding site is contributed by Arg218. ATP-binding positions include 218 to 220 (RDE) and Gln227. Residue His449 coordinates L-aspartate. Glu483 is an ATP binding site. An L-aspartate-binding site is contributed by Arg490. 535–538 (GLDR) provides a ligand contact to ATP.

Belongs to the class-II aminoacyl-tRNA synthetase family. Type 1 subfamily. As to quaternary structure, homodimer.

It is found in the cytoplasm. It catalyses the reaction tRNA(Asp) + L-aspartate + ATP = L-aspartyl-tRNA(Asp) + AMP + diphosphate. Catalyzes the attachment of L-aspartate to tRNA(Asp) in a two-step reaction: L-aspartate is first activated by ATP to form Asp-AMP and then transferred to the acceptor end of tRNA(Asp). This Mannheimia succiniciproducens (strain KCTC 0769BP / MBEL55E) protein is Aspartate--tRNA ligase.